A 290-amino-acid chain; its full sequence is Elongation factor Ts (290 aa).

An involved in Mg(2+) ion dislocation from EF-Tu region spans residues 82–85; that stretch reads TDFV.

It belongs to the EF-Ts family.

The protein resides in the cytoplasm. Associates with the EF-Tu.GDP complex and induces the exchange of GDP to GTP. It remains bound to the aminoacyl-tRNA.EF-Tu.GTP complex up to the GTP hydrolysis stage on the ribosome. This chain is Elongation factor Ts, found in Cellvibrio japonicus (strain Ueda107) (Pseudomonas fluorescens subsp. cellulosa).